The primary structure comprises 62 residues: UPF0339 protein Atu5359 (62 aa).

Belongs to the UPF0339 family.

The sequence is that of UPF0339 protein Atu5359 from Agrobacterium fabrum (strain C58 / ATCC 33970) (Agrobacterium tumefaciens (strain C58)).